The sequence spans 501 residues: Lysine--tRNA ligase (501 aa).

Glu-404 and Glu-411 together coordinate Mg(2+).

It belongs to the class-II aminoacyl-tRNA synthetase family. As to quaternary structure, homodimer. Mg(2+) serves as cofactor.

The protein localises to the cytoplasm. The catalysed reaction is tRNA(Lys) + L-lysine + ATP = L-lysyl-tRNA(Lys) + AMP + diphosphate. The chain is Lysine--tRNA ligase (lysS) from Campylobacter jejuni subsp. jejuni serotype O:2 (strain ATCC 700819 / NCTC 11168).